A 332-amino-acid polypeptide reads, in one-letter code: Homeobox protein SIX3 (332 aa).

The interval 72–119 is interaction with TLE5; it reads APPEELSMFQLPTLNFSPEQVASVCETLEETGDIERLGRFLWSLPVAP. Positions 206–265 form a DNA-binding region, homeobox; the sequence is GEQKTHCFKERTRSLLREWYLQDPYPNPSKKRELAQATGLTPTQVGNWFKNRRQRDRAAA. A bind to RHO promoter region spans residues 232 to 234; that stretch reads NPS. 2 disordered regions span residues 232–251 and 258–332; these read NPSK…TQVG and RQRD…ECDV. The span at 293–309 shows a compositional bias: low complexity; the sequence is SAESPSTAASPTTSVSS. The span at 316-332 shows a compositional bias: polar residues; it reads TGTSILSVTSSDSECDV.

It belongs to the SIX/Sine oculis homeobox family. Interacts with EYA4; translocates EYA4 from the cytoplasm to the nucleus and promotes activation of their target genes. Interacts with MTA1 and HDAC2; represses its own transcription. Interacts with MTA1; facilitates the binding of SIX3 to the core DNA motif of SIX3 promoter. Interacts with EYA1; promotes EYA1 translocation to the nucleus. Interacts with TLE1 and TLE5 (via Q domain); can act in combination with either TLE1 and/or TLE5 leading to transcriptional repression or activation, respectively. Interacts (via homeobox) with NR4A3; differentially regulates the transcriptional activities NR4A3. Interacts with GMNN. Interacts with TLE4.

The protein resides in the nucleus. Transcriptional regulator which can act as both a transcriptional repressor and activator by binding a ATTA homeodomain core recognition sequence on these target genes. During forebrain development represses WNT1 expression allowing zona limitans intrathalamica formation and thereby ensuring proper anterio-posterior patterning of the diencephalon and formation of the rostral diencephalon. Acts as a direct upstream activator of SHH expression in the rostral diencephalon ventral midline and that in turn SHH maintains its expression. In addition, Six3 activity is required for the formation of the telencephalon. During postnatal stages of brain development is necessary for ependymal cell maturation by promoting the maturation of radial glia into ependymal cells through regulation of neuroblast proliferation and migration. Acts on the proliferation and differentiation of neural progenitor cells through activating transcription of CCND1 and CCND2. During early lens formation plays a role in lens induction and specification by activating directly PAX6 in the presumptive lens ectoderm. In turn PAX6 activates SIX3 resulting in activation of PDGFRA and CCND1 promoting cell proliferation. Also is required for the neuroretina development by directly suppressing WNT8B expression in the anterior neural plate territory. Its action during retina development and lens morphogenesis is TLE5 and TLE4-dependent manner. Furthermore, during eye development regulates several genes expression. Before and during early lens development represses the CRYGF promoter by binding a SIX repressor element. Directly activates RHO transcription, or cooperates with CRX or NRL. Six3 also functions in the formation of the proximodistal axis of the optic cup, and promotes the formation of optic vesicles-like structures. During pituitary development, acts in parallel or alternatively with HESX1 to control cell proliferation through Wnt/beta-catenin pathway. Plays a role in eye development by suppressing WNT1 expression and in dorsal-ventral patterning by repressing BMP signaling pathway. The protein is Homeobox protein SIX3 (SIX3) of Homo sapiens (Human).